A 166-amino-acid chain; its full sequence is Large ribosomal subunit protein uL10 (166 aa).

The protein belongs to the universal ribosomal protein uL10 family. Part of the ribosomal stalk of the 50S ribosomal subunit. The N-terminus interacts with L11 and the large rRNA to form the base of the stalk. The C-terminus forms an elongated spine to which L12 dimers bind in a sequential fashion forming a multimeric L10(L12)X complex.

In terms of biological role, forms part of the ribosomal stalk, playing a central role in the interaction of the ribosome with GTP-bound translation factors. The protein is Large ribosomal subunit protein uL10 of Streptococcus gordonii (strain Challis / ATCC 35105 / BCRC 15272 / CH1 / DL1 / V288).